The primary structure comprises 918 residues: Cell cycle and apoptosis regulator protein 2 (918 aa).

The tract at residues methionine 1–threonine 35 is disordered. Threonine 35 is subject to Phosphothreonine. Lysine 112 is subject to N6-acetyllysine; by KAT8. Position 123 is an N6-methyllysine (lysine 123). Phosphoserine is present on serine 124. 3 disordered regions span residues asparagine 179–histidine 219, lysine 446–isoleucine 510, and valine 568–aspartate 637. Arginine 180 carries the omega-N-methylarginine modification. N6-acetyllysine; by KAT8 is present on lysine 215. 2 stretches are compositionally biased toward low complexity: residues alanine 447–proline 468 and alanine 482–glutamate 492. Position 454 is a phosphothreonine; by ATM, ATR and CK2 (threonine 454). Phosphothreonine is present on threonine 484. Serine 569 carries the phosphoserine modification. A compositionally biased stretch (basic and acidic residues) spans glutamate 572–alanine 597. Residue lysine 586 forms a Glycyl lysine isopeptide (Lys-Gly) (interchain with G-Cter in SUMO2 and SUMO3); alternate linkage. A Glycyl lysine isopeptide (Lys-Gly) (interchain with G-Cter in SUMO2); alternate cross-link involves residue lysine 586. An interaction with MCC region spans residues glutamate 605–aspartate 665. A phosphoserine mark is found at serine 622, serine 670, serine 673, serine 676, serine 682, and serine 803. An interaction with NR1D1 region spans residues aspartate 699–asparagine 918. Residues leucine 824–lysine 904 are a coiled coil. At threonine 892 the chain carries Phosphothreonine.

In terms of assembly, component of the DBIRD complex. Interacts with ZNF326/ZIRD; the interaction is direct. Interacts (via N-terminus) with SIRT1, which inhibits the deacetylation of substrates. Interacts (via N-terminus) with SUV39H1; this interaction abolishes the interaction with SIRT1. Component of a nuclear receptor-mediated transcription complex composed of at least ZNF335, CCAR2 and EMSY; the complex stimulates the transcription of nuclear receptor target genes such as SOX9 and HOXA1. Within the complex interacts with EMSY and interacts with ZNF335 (via C-terminus). Components of this complex may associate with components of a histone methylation complex to form a complex at least composed of ZNF335, HCFC1, CCAR2, EMSY, MKI67, RBBP5, ASH2L and WDR5. Within this complex, interacts with ASH2L. Interacts with NR1D1. Interacts (via N-terminus) with ESR1 and ESR2. Interacts (via N-terminus) with HDAC3 (via C-terminus). Interacts with HDAC1 and MED2F. Interacts with MCC. Interacts (via N-terminus) with NR1H2 and NR1H3 in a ligand-independent manner. Interacts with CSNK2A1. Interacts (via N-terminus) with p53/TP53. Interacts (via N-terminus) with BRCA1 (via the BRCT domains). Interacts (via N-terminus) with CHEK2 (via protein kinase domain). Interacts with PSEM3. Interacts (via N-terminus) with PSIA3 and SENP1. The sumoylated form shows a preferential interaction with SIRT1 as compared to its unmodified form. Interacts with CECR2; may form part of the CERF-1 and/or CEF-5 ISWI chromatin remodeling complexes in embryonic stem cells. ATM/ATR-mediated phosphorylation at Thr-454 upon DNA damage promotes binding to SIRT1. Phosphorylation at Thr-454 promotes its sumoylation by switching the binding partner of CCAR2 from SENP1 to PIAS3. In terms of processing, acetylation at Lys-112 and Lys-215 by KAT8 prevents inhibitory binding to SIRT1 and increases its deacetylase activity. Post-translationally, genotoxic stress induces its sumoylation and sumoylation promotes the SIRT1-CCAR2 interaction which in turn inhibits SIRT1-mediated deacetylation of p53/TP53. Sumoylation leads to transcriptional activation of p53/TP53 by sequestering SIRT1 from p53/TP53. Desumoylated by SENP1.

Its subcellular location is the nucleus. The protein localises to the cytoplasm. The protein resides in the cytoskeleton. It is found in the spindle. Its function is as follows. Core component of the DBIRD complex, a multiprotein complex that acts at the interface between core mRNP particles and RNA polymerase II (RNAPII) and integrates transcript elongation with the regulation of alternative splicing: the DBIRD complex affects local transcript elongation rates and alternative splicing of a large set of exons embedded in (A + T)-rich DNA regions. Inhibits SIRT1 deacetylase activity leading to increasing levels of p53/TP53 acetylation and p53-mediated apoptosis. Inhibits SUV39H1 methyltransferase activity. Mediates ligand-dependent transcriptional activation by nuclear hormone receptors. Plays a critical role in maintaining genomic stability and cellular integrity following UV-induced genotoxic stress. Regulates the circadian expression of the core clock components NR1D1 and BMAL1. Enhances the transcriptional repressor activity of NR1D1 through stabilization of NR1D1 protein levels by preventing its ubiquitination and subsequent degradation. Represses the ligand-dependent transcriptional activation function of ESR2. Acts as a regulator of PCK1 expression and gluconeogenesis by a mechanism that involves, at least in part, both NR1D1 and SIRT1. Negatively regulates the deacetylase activity of HDAC3 and can alter its subcellular localization. Positively regulates the beta-catenin pathway (canonical Wnt signaling pathway) and is required for MCC-mediated repression of the beta-catenin pathway. Represses ligand-dependent transcriptional activation function of NR1H2 and NR1H3 and inhibits the interaction of SIRT1 with NR1H3. Plays an important role in tumor suppression through p53/TP53 regulation; stabilizes p53/TP53 by affecting its interaction with ubiquitin ligase MDM2. Represses the transcriptional activator activity of BRCA1. Inhibits SIRT1 in a CHEK2 and PSEM3-dependent manner and inhibits the activity of CHEK2 in vitro. The sequence is that of Cell cycle and apoptosis regulator protein 2 (CCAR2) from Pongo abelii (Sumatran orangutan).